Consider the following 274-residue polypeptide: Diaminopimelate epimerase (274 aa).

The substrate site is built by Asn-11, Gln-44, and Asn-64. Residue Cys-73 is the Proton donor of the active site. Residues 74 to 75 (GN), Asn-157, Asn-190, and 208 to 209 (ER) each bind substrate. Cys-217 (proton acceptor) is an active-site residue. 218–219 (GS) is a binding site for substrate.

It belongs to the diaminopimelate epimerase family. Homodimer.

It is found in the cytoplasm. It carries out the reaction (2S,6S)-2,6-diaminopimelate = meso-2,6-diaminopimelate. The protein operates within amino-acid biosynthesis; L-lysine biosynthesis via DAP pathway; DL-2,6-diaminopimelate from LL-2,6-diaminopimelate: step 1/1. Its function is as follows. Catalyzes the stereoinversion of LL-2,6-diaminopimelate (L,L-DAP) to meso-diaminopimelate (meso-DAP), a precursor of L-lysine and an essential component of the bacterial peptidoglycan. This is Diaminopimelate epimerase from Actinobacillus pleuropneumoniae serotype 7 (strain AP76).